Consider the following 688-residue polypeptide: Glycine--tRNA ligase beta subunit (688 aa).

This sequence belongs to the class-II aminoacyl-tRNA synthetase family. As to quaternary structure, tetramer of two alpha and two beta subunits.

The protein resides in the cytoplasm. The enzyme catalyses tRNA(Gly) + glycine + ATP = glycyl-tRNA(Gly) + AMP + diphosphate. This Lactobacillus delbrueckii subsp. bulgaricus (strain ATCC BAA-365 / Lb-18) protein is Glycine--tRNA ligase beta subunit.